The following is a 235-amino-acid chain: Thiamine import ATP-binding protein ThiQ (235 aa).

Positions 2–230 constitute an ABC transporter domain; that stretch reads LKLIDITWLY…QASASALLGI (229 aa). Residue 32–39 participates in ATP binding; sequence GPSGAGKS.

Belongs to the ABC transporter superfamily. Thiamine importer (TC 3.A.1.19.1) family. The complex is composed of two ATP-binding proteins (ThiQ), two transmembrane proteins (ThiP) and a solute-binding protein (ThiB).

The protein resides in the cell inner membrane. The catalysed reaction is thiamine(out) + ATP + H2O = thiamine(in) + ADP + phosphate + H(+). In terms of biological role, part of the ABC transporter complex ThiBPQ involved in thiamine import. Responsible for energy coupling to the transport system. Is also involved in thiamine pyrophosphate (TPP) transport. This chain is Thiamine import ATP-binding protein ThiQ, found in Salmonella typhimurium (strain LT2 / SGSC1412 / ATCC 700720).